Here is a 294-residue protein sequence, read N- to C-terminus: C-type lectin domain family 4 member G (294 aa).

Topologically, residues 1 to 30 (MNTGEYNKLGSAIEEVSRGQLGRWECYKQR) are cytoplasmic. The helical; Signal-anchor for type II membrane protein transmembrane segment at 31 to 51 (LFFLVLALLVATVLWALILST) threads the bilayer. Residues 52–294 (LLSSASSKLR…WICEKRSSCY (243 aa)) are Extracellular-facing. A glycan (N-linked (GlcNAc...) asparagine) is linked at Asn-73. Residues 100–151 (AQLQTTLAEFKDIQAKLMEQESILKELQERVTQDLAKASRDRENIRSELFQA) adopt a coiled-coil conformation. 3 N-linked (GlcNAc...) asparagine glycosylation sites follow: Asn-159, Asn-246, and Asn-256. The C-type lectin domain occupies 172-287 (FQGSCYYFSE…CTNERDGWIC (116 aa)). A disulfide bond links Cys-264 and Cys-278.

The protein localises to the cell membrane. Its function is as follows. Binds mannose, N-acetylglucosamine (GlcNAc) and fucose, but not galactose, in a Ca(2+)-dependent manner. This Mus musculus (Mouse) protein is C-type lectin domain family 4 member G (Clec4g).